Here is an 828-residue protein sequence, read N- to C-terminus: MASTLPTTWPHESVKFEDVSLTFTEEEWAQLDFQQKCLYREIMMENYSNMISVEHHFSKPNVISQLEKAEDCWPMQREIPQDTLPECSWPSPDPGMNSFPSKSPLMKIEVVEVLTLNKDVAGPRNALIQSLYPEDLNPGNLKPAQQPSKRLTDTEASRQKFRHFQYEESAGPQKAMSQLRKLCHQWLQPNTRSKKQILELLVLEQFLNALPEKFRVWVESQHPEDCKAVVALLENMTSVSKDDASLACSSEATDQLKEKRKGVATLPVTFAAEVPAEEPVTFQDVAVDFNEEEWRLLGPTQKTEYHDVMLETLGNLVSVGWEPTLGNRELTPDSPIPVVKPIHDPNTNDLSRNGTQSTVFESILEDGVKEMHSIESNQVGNLQEKGHPQKKFSESSKSQDQTSRHKSQGSLNEVLPRKYVKVKQKGTGKRKGRTNTISMTRGLRIRKQQKDSVEWQGRSGSTPVTHGSSIKKQQQGSEQGKPGTSRDPITLTVPAKVYQKATGSEESIFMDSSDAMVPDVPPKIHQKGPEWHKVGESNNSMLQGSSVQNHQMESGAGRASDNSLLTHALPVKSHQKGYKEGNVQGNRNSWKHIKPHQKGSKGERVEELSTSEKHVPYVKNHLKTSERGKDREINASIKCDPYIKTYYRGSDVGRLRRANNCRKAFSLHAQQISFIKIHKGSQVCRCSECGKLFRNARYFSVHKKIHTGERPYMCMACGKAFVQSSSLTQHLRIHSGERPFECSECGRTFNDRSAISQHLRTHTGAKPYHCERCGKAFRQSSHLTRHERTHTGERPYVCIKCGKAFTQSSHLIGHQKTHGIKFKKQPKL.

Residues 14–85 (VKFEDVSLTF…QREIPQDTLP (72 aa)) enclose the KRAB 1 domain. K15 is covalently cross-linked (Glycyl lysine isopeptide (Lys-Gly) (interchain with G-Cter in ubiquitin)). The 83-residue stretch at 158 to 240 (RQKFRHFQYE…ALLENMTSVS (83 aa)) folds into the SCAN box domain. The KRAB 2 domain occupies 280-370 (VTFQDVAVDF…ESILEDGVKE (91 aa)). Disordered stretches follow at residues 328–355 (RELT…RNGT), 377–490 (NQVG…DPIT), and 575–611 (QKGY…LSTS). The segment covering 345–355 (PNTNDLSRNGT) has biased composition (polar residues). A compositionally biased stretch (basic and acidic residues) spans 384 to 394 (EKGHPQKKFSE). Over residues 418-433 (KYVKVKQKGTGKRKGR) the composition is skewed to basic residues. A compositionally biased stretch (polar residues) spans 458 to 478 (RSGSTPVTHGSSIKKQQQGSE). The span at 589 to 599 (SWKHIKPHQKG) shows a compositional bias: basic residues. The span at 600–611 (SKGERVEELSTS) shows a compositional bias: basic and acidic residues. 5 C2H2-type zinc fingers span residues 684–706 (CRCS…KKIH), 712–734 (YMCM…LRIH), 740–762 (FECS…LRTH), 768–790 (YHCE…ERTH), and 796–818 (YVCI…QKTH).

This sequence belongs to the krueppel C2H2-type zinc-finger protein family. As to quaternary structure, interacts with NGFR/p75(NTR). Interacts (via KRAB 1 domain) with TRAF6. Interacts (when ubiquitinated at Lys-15) with SQSTM1/p62. In terms of processing, ubiquitinated by TRAF6 at Lys-15 through 'Lys-63'-linked polyubiquitination. 'Lys-63'-linked polyubiquitination occurs in response to NGFR/p75(NTR) cleavage by gamma-secretase and promotes binding with the ICD cleavage product of NGFR/p75(NTR), followed by translocation into the nucleus and subsequent apoptosis. Ubiquitously expressed at low level. Expressed at higher level in testis.

The protein localises to the cytoplasm. Its subcellular location is the nucleus. Transcription regulator involved in NGFR/p75(NTR)-mediated apoptosis. Essential component of the NGFR/p75(NTR) apoptotic pathway: upon ligand-binding and subsequent cleavage of NGFR/p75(NTR), binds to the intracellular domain (ICD) cleavage product of NGFR/p75(NTR), translocates to the nucleus and induces apoptosis, possibly by regulating expression of key regulators of apoptosis. Induces NGFR/p75(NTR)-mediated apoptosis in retina and sympathetic neurons. May also regulate expression of neuronal cholesterol biosynthesis genes. Probably acts as a transcription repressor: specifically binds to the 3'-end of zinc-finger coding genes and recruiting chromatin-modifying proteins such as SETDB1 and TRIM28/KAP1, leading to transcription repression. This Mus musculus (Mouse) protein is Neurotrophin receptor-interacting factor 1 (Nrif1).